A 478-amino-acid chain; its full sequence is ATP synthase subunit beta (478 aa).

Residue 152 to 159 (GGAGVGKT) participates in ATP binding.

It belongs to the ATPase alpha/beta chains family. As to quaternary structure, F-type ATPases have 2 components, CF(1) - the catalytic core - and CF(0) - the membrane proton channel. CF(1) has five subunits: alpha(3), beta(3), gamma(1), delta(1), epsilon(1). CF(0) has three main subunits: a(1), b(2) and c(9-12). The alpha and beta chains form an alternating ring which encloses part of the gamma chain. CF(1) is attached to CF(0) by a central stalk formed by the gamma and epsilon chains, while a peripheral stalk is formed by the delta and b chains.

It is found in the cell membrane. It carries out the reaction ATP + H2O + 4 H(+)(in) = ADP + phosphate + 5 H(+)(out). Produces ATP from ADP in the presence of a proton gradient across the membrane. The catalytic sites are hosted primarily by the beta subunits. This Wolbachia pipientis subsp. Culex pipiens (strain wPip) protein is ATP synthase subunit beta.